The sequence spans 330 residues: D-cysteine desulfhydrase (330 aa).

An N6-(pyridoxal phosphate)lysine modification is found at lysine 52.

It belongs to the ACC deaminase/D-cysteine desulfhydrase family. In terms of assembly, homodimer. The cofactor is pyridoxal 5'-phosphate.

The catalysed reaction is D-cysteine + H2O = hydrogen sulfide + pyruvate + NH4(+) + H(+). Catalyzes the alpha,beta-elimination reaction of D-cysteine and of several D-cysteine derivatives. It could be a defense mechanism against D-cysteine. The polypeptide is D-cysteine desulfhydrase (Yersinia enterocolitica serotype O:8 / biotype 1B (strain NCTC 13174 / 8081)).